A 198-amino-acid polypeptide reads, in one-letter code: Probable nicotinate-nucleotide adenylyltransferase (198 aa).

Belongs to the NadD family.

It carries out the reaction nicotinate beta-D-ribonucleotide + ATP + H(+) = deamido-NAD(+) + diphosphate. The protein operates within cofactor biosynthesis; NAD(+) biosynthesis; deamido-NAD(+) from nicotinate D-ribonucleotide: step 1/1. In terms of biological role, catalyzes the reversible adenylation of nicotinate mononucleotide (NaMN) to nicotinic acid adenine dinucleotide (NaAD). This is Probable nicotinate-nucleotide adenylyltransferase from Chlorobium phaeobacteroides (strain BS1).